A 44-amino-acid chain; its full sequence is F420-non-reducing hydrogenase vhu subunit U (44 aa).

Sec20 and Cys23 together coordinate Ni(2+). Residue Sec20 is a non-standard amino acid, selenocysteine. A propeptide spans 27-44 (MIVEDAEGNVVFEIVNDE) (removed in mature form).

The protein belongs to the [NiFe]/[NiFeSe] hydrogenase large subunit family. In terms of assembly, the F420-non-reducing hydrogenase vhu is composed of four subunits; VhuA, VhuD, VhuG and VhuU. Requires Ni(2+) as cofactor.

The polypeptide is F420-non-reducing hydrogenase vhu subunit U (vhuU) (Methanococcus voltae).